A 319-amino-acid chain; its full sequence is Olfactory receptor 10Q1 (319 aa).

The Extracellular portion of the chain corresponds to 1-29 (MPVGKLVFNQSEPTEFVFRAFTTATEFQV). N-linked (GlcNAc...) asparagine glycosylation occurs at Asn9. Residues 30-50 (LLFLLFLLLYLMILCGNTAII) form a helical membrane-spanning segment. The Cytoplasmic portion of the chain corresponds to 51 to 58 (WVVCTHST). Residues 59–79 (LRTPMYFFLSNLSFLELCYTT) traverse the membrane as a helical segment. The Extracellular segment spans residues 80-103 (VVVPLMLSNILGAQKPISLAGCGA). Cysteines 101 and 194 form a disulfide. The chain crosses the membrane as a helical span at residues 104 to 124 (QMFFFVTLGSTDCFLLAIMAY). The Cytoplasmic portion of the chain corresponds to 125-143 (DRYVAICHPLHYTLIMTRE). The chain crosses the membrane as a helical span at residues 144-164 (LCTQMLGGALGLALFPSLQLT). The Extracellular portion of the chain corresponds to 165–202 (ALIFTLPFCGHHQEINHFLCDVPPVLRLACADIRVHQA). Residues 203–222 (VLYVVSILVLTIPFLLICVS) form a helical membrane-spanning segment. The Cytoplasmic portion of the chain corresponds to 223-242 (YVFITCAILSIRSAEGRRRA). Residues 243-263 (FSTCSFHLTVVLLQYGCCSLV) traverse the membrane as a helical segment. The Extracellular portion of the chain corresponds to 264–276 (YLRPRSSTSEDED). Residues 277 to 297 (SQIALVYTFVTPLLNPLLYSL) form a helical membrane-spanning segment. Topologically, residues 298-319 (RNKDVKGALRSAIIRKAASDAN) are cytoplasmic.

It belongs to the G-protein coupled receptor 1 family.

It localises to the cell membrane. In terms of biological role, odorant receptor. The protein is Olfactory receptor 10Q1 (OR10Q1) of Homo sapiens (Human).